The chain runs to 286 residues: Thymidylate synthase (286 aa).

140-141 (RR) provides a ligand contact to dUMP. C161 (nucleophile) is an active-site residue. DUMP is bound by residues 185–188 (RSND), N196, and 226–228 (HIY). D188 lines the (6R)-5,10-methylene-5,6,7,8-tetrahydrofolate pocket. Residue A285 participates in (6R)-5,10-methylene-5,6,7,8-tetrahydrofolate binding.

It belongs to the thymidylate synthase family. Bacterial-type ThyA subfamily. As to quaternary structure, homodimer.

Its subcellular location is the cytoplasm. It catalyses the reaction dUMP + (6R)-5,10-methylene-5,6,7,8-tetrahydrofolate = 7,8-dihydrofolate + dTMP. It functions in the pathway pyrimidine metabolism; dTTP biosynthesis. Catalyzes the reductive methylation of 2'-deoxyuridine-5'-monophosphate (dUMP) to 2'-deoxythymidine-5'-monophosphate (dTMP) while utilizing 5,10-methylenetetrahydrofolate (mTHF) as the methyl donor and reductant in the reaction, yielding dihydrofolate (DHF) as a by-product. This enzymatic reaction provides an intracellular de novo source of dTMP, an essential precursor for DNA biosynthesis. The polypeptide is Thymidylate synthase (Streptococcus thermophilus (strain ATCC BAA-491 / LMD-9)).